Here is a 405-residue protein sequence, read N- to C-terminus: MYMKKFNKVILAYSGGLDTSIIIPWLKENYGCEVIAVVGNVGQSDELVGLKEKAIKTGASKIYIEDLTKEFVEDYIFPTIQAGAKYEGKYLLGTSFARPIIAKRLVEIAKLEGADAICHGCTGKGNDQVRFELAIKTFNPEMQIIAPWRTWEIKSREEEIQYAIDNEVPINITYETNYSKDKNLWHLSHEGLDLEFPENEPKYDKILELCNTLEKAPNEAEYITLGFEKGIATSLNGEKLDGVTLLQELNKIGGKHGIGVIDMVENRLVGMKSRGVYETPGGSILYKAHKDLEELCLDKETSHYKEIVSLKFADLVYNGQWFTPLREALSAFISKTQETVTGEIKLKLYKGNIINAGMTSPYSLYSEEYATFGEDGIYNQKDAEGFINLFSLPSIVQAKMAQKLN.

12 to 20 (AYSGGLDTS) is a binding site for ATP. Residues Tyr90 and Ser95 each coordinate L-citrulline. Position 120 (Gly120) interacts with ATP. 3 residues coordinate L-aspartate: Thr122, Asn126, and Asp127. Asn126 contributes to the L-citrulline binding site. L-citrulline is bound by residues Arg130, Ser179, Ser188, Glu265, and Tyr277.

It belongs to the argininosuccinate synthase family. Type 1 subfamily. As to quaternary structure, homotetramer.

The protein localises to the cytoplasm. The catalysed reaction is L-citrulline + L-aspartate + ATP = 2-(N(omega)-L-arginino)succinate + AMP + diphosphate + H(+). It participates in amino-acid biosynthesis; L-arginine biosynthesis; L-arginine from L-ornithine and carbamoyl phosphate: step 2/3. In Clostridium perfringens (strain 13 / Type A), this protein is Argininosuccinate synthase.